A 252-amino-acid chain; its full sequence is Triosephosphate isomerase (252 aa).

Residue 11 to 13 (NWK) coordinates substrate. H97 serves as the catalytic Electrophile. The active-site Proton acceptor is E169. Residues G175, S215, and 236–237 (GG) contribute to the substrate site.

This sequence belongs to the triosephosphate isomerase family. In terms of assembly, homodimer.

Its subcellular location is the cytoplasm. The catalysed reaction is D-glyceraldehyde 3-phosphate = dihydroxyacetone phosphate. Its pathway is carbohydrate biosynthesis; gluconeogenesis. The protein operates within carbohydrate degradation; glycolysis; D-glyceraldehyde 3-phosphate from glycerone phosphate: step 1/1. Its function is as follows. Involved in the gluconeogenesis. Catalyzes stereospecifically the conversion of dihydroxyacetone phosphate (DHAP) to D-glyceraldehyde-3-phosphate (G3P). In Mycoplasmoides gallisepticum (strain R(low / passage 15 / clone 2)) (Mycoplasma gallisepticum), this protein is Triosephosphate isomerase.